We begin with the raw amino-acid sequence, 178 residues long: MFGIHSLAGVLLLVIVQSQLASPLQEAEDNSSLETADSLLEDLRGVPNMKRQSEGTFSNYYSKYQEERMARDFLHWLMNSKRSGAPSKRHADGTYTSDVSTYLQDQAAKDFVSWLKSGPARRESAEESMNGPMSRRHVDGSFTSDVNKVLDSLAAKEYLLWVMTSKTSGKSNKRQEDH.

A signal peptide spans 1–21 (MFGIHSLAGVLLLVIVQSQLA). 3 propeptides span residues 83-87 (SGAPS), 123-134 (ESAEESMNGPMS), and 171-178 (SNKRQEDH).

The protein belongs to the glucagon family.

It is found in the secreted. Promotes hydrolysis of glycogen and lipids, and raises the blood sugar level. The chain is Glucagon-2 (gcg2) from Oncorhynchus mykiss (Rainbow trout).